Reading from the N-terminus, the 420-residue chain is Dihydrolipoyllysine-residue succinyltransferase component of 2-oxoglutarate dehydrogenase complex (420 aa).

The Lipoyl-binding domain occupies 1 to 76; the sequence is MAEVKVPELA…EVGQAVAVVG (76 aa). Lys-42 is modified (N6-lipoyllysine). A disordered region spans residues 75 to 201; sequence VGEGQVNTSN…EKMSRRKKTA (127 aa). Residues 81–90 show a composition bias toward polar residues; the sequence is NTSNDSSNES. The segment covering 91-102 has biased composition (basic and acidic residues); that stretch reads SQKDEAKEKETP. Residues 103 to 127 are compositionally biased toward polar residues; it reads KQSNPNSSESENTQDNSQQRINATP. The Peripheral subunit-binding (PSBD) domain occupies 124–160; that stretch reads NATPSARRHARKNGVDLSEVSGKGNDVLRKDDVENSQ. Positions 149-158 are enriched in basic and acidic residues; the sequence is DVLRKDDVEN. Over residues 159–188 the composition is skewed to low complexity; the sequence is SQKSSSQTAKSESKSQNSGSKQSNNNPSKP. Active-site residues include His-391 and Asp-395.

It belongs to the 2-oxoacid dehydrogenase family. In terms of assembly, forms a 24-polypeptide structural core with octahedral symmetry. Part of the 2-oxoglutarate dehydrogenase (OGDH) complex composed of E1 (2-oxoglutarate dehydrogenase), E2 (dihydrolipoamide succinyltransferase) and E3 (dihydrolipoamide dehydrogenase); the complex contains multiple copies of the three enzymatic components (E1, E2 and E3). (R)-lipoate serves as cofactor.

The catalysed reaction is N(6)-[(R)-dihydrolipoyl]-L-lysyl-[protein] + succinyl-CoA = N(6)-[(R)-S(8)-succinyldihydrolipoyl]-L-lysyl-[protein] + CoA. Its pathway is amino-acid degradation; L-lysine degradation via saccharopine pathway; glutaryl-CoA from L-lysine: step 6/6. Functionally, E2 component of the 2-oxoglutarate dehydrogenase (OGDH) complex which catalyzes the second step in the conversion of 2-oxoglutarate to succinyl-CoA and CO(2). This is Dihydrolipoyllysine-residue succinyltransferase component of 2-oxoglutarate dehydrogenase complex (odhB) from Staphylococcus epidermidis (strain ATCC 12228 / FDA PCI 1200).